Consider the following 869-residue polypeptide: Probable beta-glucosidase F (869 aa).

An N-terminal signal peptide occupies residues 1–19 (MRVLSAIALVASLVPSALS). N-linked (GlcNAc...) asparagine glycosylation is found at N69, N77, and N261. Residue D289 is part of the active site. N-linked (GlcNAc...) asparagine glycosylation is found at N332, N364, N399, N425, and N478. The segment at 678 to 698 (AYPPTRPPKGPTPTYPTTIPN) is disordered. Positions 681–691 (PTRPPKGPTPT) are enriched in pro residues. N-linked (GlcNAc...) asparagine glycosylation occurs at N728.

This sequence belongs to the glycosyl hydrolase 3 family.

The protein localises to the secreted. The catalysed reaction is Hydrolysis of terminal, non-reducing beta-D-glucosyl residues with release of beta-D-glucose.. Its pathway is glycan metabolism; cellulose degradation. In terms of biological role, beta-glucosidases are one of a number of cellulolytic enzymes involved in the degradation of cellulosic biomass. Catalyzes the last step releasing glucose from the inhibitory cellobiose. In Neosartorya fischeri (strain ATCC 1020 / DSM 3700 / CBS 544.65 / FGSC A1164 / JCM 1740 / NRRL 181 / WB 181) (Aspergillus fischerianus), this protein is Probable beta-glucosidase F (bglF).